The chain runs to 447 residues: GTPase Der (447 aa).

EngA-type G domains follow at residues 4 to 165 and 180 to 357; these read QIIT…PEEE and LQIV…KIWN. Residues 10-17, 57-61, 119-122, 186-193, 233-237, and 298-301 each bind GTP; these read GRPNVGKS, DTPGL, NKCE, GRPNAGKS, DTAGL, and NKWD. The KH-like domain occupies 358 to 443; sequence KKITTSKLNE…PIRFTYVKTK (86 aa).

Belongs to the TRAFAC class TrmE-Era-EngA-EngB-Septin-like GTPase superfamily. EngA (Der) GTPase family. As to quaternary structure, associates with the 50S ribosomal subunit.

Functionally, GTPase that plays an essential role in the late steps of ribosome biogenesis. This Rickettsia rickettsii (strain Sheila Smith) protein is GTPase Der.